The primary structure comprises 221 residues: Germin-like protein 8-2 (221 aa).

An N-terminal signal peptide occupies residues 1 to 24; sequence MASSSFSFLLVAALLGLASWKAIA. Cys34 and Cys49 are joined by a disulfide. N-linked (GlcNAc...) asparagine glycans are attached at residues Asn54 and Asn79. Residues 64–215 form the Cupin type-1 domain; the sequence is AMLDKPRDTN…AFQVDKKIID (152 aa). Mn(2+)-binding residues include His112, His114, Glu119, and His160.

Belongs to the germin family. Oligomer (believed to be a pentamer but probably hexamer).

The protein localises to the secreted. The protein resides in the extracellular space. It localises to the apoplast. Functionally, plays a role in broad-spectrum disease resistance. Probably has no oxalate oxidase activity even if the active site is conserved. This is Germin-like protein 8-2 (GER3) from Oryza sativa subsp. japonica (Rice).